We begin with the raw amino-acid sequence, 1579 residues long: DNA-directed RNA polymerase II subunit RPB1 (1579 aa).

Cys68, Cys71, Cys78, His81, Cys108, Cys111, Cys149, and Cys171 together coordinate Zn(2+). Residues Asp485, Asp487, and Asp489 each contribute to the Mg(2+) site. A bridging helix region spans residues 642-654 (PQEFFFHAMAGRE). Lys1080 is covalently cross-linked (Glycyl lysine isopeptide (Lys-Gly) (interchain with G-Cter in ubiquitin)). Positions 1382 to 1565 (SPTYSPTSPS…NSPQYSPRSP (184 aa)) are enriched in low complexity. The disordered stretch occupies residues 1382 to 1579 (SPTYSPTSPS…DQNDDKDKKQ (198 aa)). A run of 16 repeats spans residues 1385 to 1391 (YSPTSPS), 1392 to 1398 (YSPTSPS), 1399 to 1405 (YSPTSPS), 1406 to 1412 (YSPTSPS), 1413 to 1419 (YSPTSPS), 1420 to 1426 (YSPTSPS), 1427 to 1433 (YSPTSPS), 1434 to 1440 (YSPTSPS), 1441 to 1447 (YSPTSPS), 1448 to 1454 (YSPTSPS), 1455 to 1461 (YSPTSPS), 1462 to 1468 (YSPTSPS), 1469 to 1475 (YSPTSPS), 1476 to 1482 (YSPTSPS), 1483 to 1489 (YSPTSPS), and 1490 to 1496 (YSPTSPS). Residues 1385-1566 (YSPTSPSYSP…SPQYSPRSPL (182 aa)) are C-terminal domain (CTD); 26 X 7 AA approximate tandem repeats of Y-S-P-T-S-P-[S-A-Q]. The stretch at 1497-1503 (YSPTSPL) is one 17; approximate repeat. 7 tandem repeats follow at residues 1504 to 1510 (YSPTSPS), 1511 to 1517 (YSPTSPS), 1518 to 1524 (YSPTSPS), 1525 to 1531 (YSPTSPS), 1532 to 1538 (YSPTSPQ), 1539 to 1545 (YSPTSPA), and 1546 to 1552 (YSPTSPQ). Residues 1553 to 1559 (YSPNSPQ) form a 25; approximate repeat. The stretch at 1560-1566 (YSPRSPL) is one 26; approximate repeat.

Belongs to the RNA polymerase beta' chain family. As to quaternary structure, component of the RNA polymerase II (Pol II) complex consisting of 12 subunits. The tandem 7 residues repeats in the C-terminal domain (CTD) can be highly phosphorylated. The phosphorylation activates Pol II. Phosphorylation occurs mainly at residues 'Ser-2' and 'Ser-5' of the heptapeptide repeat. The phosphorylation state is believed to result from the balanced action of site-specific CTD kinases and phosphatase, and a 'CTD code' that specifies the position of Pol II within the transcription cycle has been proposed. Post-translationally, following transcription stress, the elongating form of RNA polymerase II (RNA pol IIo) is polyubiquitinated via 'Lys-63'-linkages on Lys-1080 at DNA damage sites without leading to degradation: ubiquitination promotes RNA pol IIo backtracking to allow access by the transcription-coupled nucleotide excision repair (TC-NER) machinery. Subsequent DEF1-dependent polyubiquitination by the elongin complex via 'Lys-48'-linkages may lead to proteasome-mediated degradation; presumably at stalled RNA pol II where TC-NER has failed, to halt global transcription and enable 'last resort' DNA repair pathways.

It is found in the nucleus. The enzyme catalyses RNA(n) + a ribonucleoside 5'-triphosphate = RNA(n+1) + diphosphate. Its function is as follows. DNA-dependent RNA polymerase catalyzes the transcription of DNA into RNA using the four ribonucleoside triphosphates as substrates. Largest and catalytic component of RNA polymerase II which synthesizes mRNA precursors and many functional non-coding RNAs. Forms the polymerase active center together with the second largest subunit. Pol II is the central component of the basal RNA polymerase II transcription machinery. It is composed of mobile elements that move relative to each other. RPB1 is part of the core element with the central large cleft, the clamp element that moves to open and close the cleft and the jaws that are thought to grab the incoming DNA template. At the start of transcription, a single-stranded DNA template strand of the promoter is positioned within the central active site cleft of Pol II. A bridging helix emanates from RPB1 and crosses the cleft near the catalytic site and is thought to promote translocation of Pol II by acting as a ratchet that moves the RNA-DNA hybrid through the active site by switching from straight to bent conformations at each step of nucleotide addition. During transcription elongation, Pol II moves on the template as the transcript elongates. Elongation is influenced by the phosphorylation status of the C-terminal domain (CTD) of Pol II largest subunit (RPB1), which serves as a platform for assembly of factors that regulate transcription initiation, elongation, termination and mRNA processing. In Meyerozyma guilliermondii (strain ATCC 6260 / CBS 566 / DSM 6381 / JCM 1539 / NBRC 10279 / NRRL Y-324) (Yeast), this protein is DNA-directed RNA polymerase II subunit RPB1 (RPB1).